We begin with the raw amino-acid sequence, 178 residues long: MKAYWYDNKPGDQREPHDSGRPVSEDYLASLGVIYRHFPELSDVDALAKERGYKNRDEITVSPATMGEAYEDKVKMFFAEHLHEDEEIRYIRDGEGYFDVRGKEDEWVRIRLVKDDLIILPAGIYHRFTTDNKNYIKAMRLFQEEPKWTPLNRAPELDENQHRKSYLEGLTATSIAAN.

Residues 1–22 (MKAYWYDNKPGDQREPHDSGRP) form a disordered region. Basic and acidic residues predominate over residues 9–22 (KPGDQREPHDSGRP). The Fe(2+) site is built by H81, H83, E87, and H126. Residues H81, H83, E87, and H126 each coordinate Ni(2+).

This sequence belongs to the acireductone dioxygenase (ARD) family. It depends on Fe(2+) as a cofactor. Ni(2+) is required as a cofactor.

Its subcellular location is the cytoplasm. It is found in the nucleus. It carries out the reaction 1,2-dihydroxy-5-(methylsulfanyl)pent-1-en-3-one + O2 = 4-methylsulfanyl-2-oxobutanoate + formate + 2 H(+). The enzyme catalyses 1,2-dihydroxy-5-(methylsulfanyl)pent-1-en-3-one + O2 = 3-(methylsulfanyl)propanoate + CO + formate + 2 H(+). The protein operates within amino-acid biosynthesis; L-methionine biosynthesis via salvage pathway; L-methionine from S-methyl-5-thio-alpha-D-ribose 1-phosphate: step 5/6. Its function is as follows. Catalyzes 2 different reactions between oxygen and the acireductone 1,2-dihydroxy-3-keto-5-methylthiopentene (DHK-MTPene) depending upon the metal bound in the active site. Fe-containing acireductone dioxygenase (Fe-ARD) produces formate and 2-keto-4-methylthiobutyrate (KMTB), the alpha-ketoacid precursor of methionine in the methionine recycle pathway. Ni-containing acireductone dioxygenase (Ni-ARD) produces methylthiopropionate, carbon monoxide and formate, and does not lie on the methionine recycle pathway. This Emericella nidulans (strain FGSC A4 / ATCC 38163 / CBS 112.46 / NRRL 194 / M139) (Aspergillus nidulans) protein is Acireductone dioxygenase (adi1).